Consider the following 54-residue polypeptide: Ovomucoid (54 aa).

Residues 4–54 enclose the Kazal-like domain; sequence VNCSDYPKPVCSLLYMPLCGSDNKTYGNKCNFCNAVADSNGTLTLSHFGKC. 3 cysteine pairs are disulfide-bonded: Cys-6–Cys-36, Cys-14–Cys-33, and Cys-22–Cys-54. N-linked (GlcNAc...) asparagine glycosylation is present at Asn-43.

Its subcellular location is the secreted. The chain is Ovomucoid from Geococcyx californianus (Greater roadrunner).